The primary structure comprises 442 residues: Adenylosuccinate synthetase (442 aa).

Residues 16–22 (GDEGKGK) and 44–46 (GHT) each bind GTP. Aspartate 17 serves as the catalytic Proton acceptor. The Mg(2+) site is built by aspartate 17 and glycine 44. IMP-binding positions include 17–20 (DEGK), 42–45 (NAGH), threonine 133, arginine 147, glutamine 228, threonine 243, and arginine 307. Residue histidine 45 is the Proton donor of the active site. 303-309 (AVTGRPR) lines the substrate pocket. GTP-binding positions include arginine 309, 335–337 (KLD), and 417–419 (STG).

This sequence belongs to the adenylosuccinate synthetase family. Homodimer. Mg(2+) is required as a cofactor.

It is found in the cytoplasm. It carries out the reaction IMP + L-aspartate + GTP = N(6)-(1,2-dicarboxyethyl)-AMP + GDP + phosphate + 2 H(+). Its pathway is purine metabolism; AMP biosynthesis via de novo pathway; AMP from IMP: step 1/2. Plays an important role in the de novo pathway of purine nucleotide biosynthesis. Catalyzes the first committed step in the biosynthesis of AMP from IMP. This is Adenylosuccinate synthetase from Koribacter versatilis (strain Ellin345).